The sequence spans 522 residues: MGNIHFVYLLISCLYYSGCSGVNEEERLINDLLIVNKYNKHVRPVKHNNEVVNIALSLTLSNLISLKETDETLTSNVWMDHAWYDHRLTWNASEYSDISILRLPPELVWIPDIVLQNNNDGQYHVAYFCNVLVRPNGYVTWLPPAIFRSSCPINVLYFPFDWQNCSLKFTALNYDANEITMDLMTDTIDGKDYPIEWIIIDPEAFTENGEWEIIHKPAKKNIYPDKFPNGTNYQDVTFYLIIRRKPLFYVINFITPCVLISFLASLAFYLPAESGEKMSTAISVLLAQAVFLLLTSQRLPETALAVPLIGKYLMFIMSLVTGVIVNCGIVLNFHFRTPSTHVLSTRVKQIFLEKLPRILHMSRADESEQPDWQNDLKLRRSSSVGYISKAQEYFNIKSRSELMFEKQSERHGLVPRVTPRIGFGNNNENIAASDQLHDEIKSGIDSTNYIVKQIKEKNAYDEEVGNWNLVGQTIDRLSMFIITPVMVLGTIFIFVMGNFNHPPAKPFEGDPFDYSSDHPRCA.

The N-terminal stretch at 1–21 (MGNIHFVYLLISCLYYSGCSG) is a signal peptide. The Extracellular segment spans residues 22 to 245 (VNEEERLIND…VTFYLIIRRK (224 aa)). N-linked (GlcNAc...) asparagine glycosylation is found at Asn-91, Asn-164, and Asn-229. Cys-151 and Cys-165 are oxidised to a cystine. The next 3 helical transmembrane spans lie at 246–270 (PLFYVINFITPCVLISFLASLAFYL), 278–295 (MSTAISVLLAQAVFLLLT), and 312–333 (YLMFIMSLVTGVIVNCGIVLNF). The Cytoplasmic segment spans residues 334–476 (HFRTPSTHVL…WNLVGQTIDR (143 aa)). A Phosphotyrosine; by Tyr-kinases modification is found at Tyr-393. A helical membrane pass occupies residues 477–497 (LSMFIITPVMVLGTIFIFVMG).

This sequence belongs to the ligand-gated ion channel (TC 1.A.9) family. Acetylcholine receptor (TC 1.A.9.1) subfamily. Pentamer of two alpha chains, and one each of the beta, delta, and gamma chains.

It localises to the postsynaptic cell membrane. Its subcellular location is the cell membrane. It carries out the reaction K(+)(in) = K(+)(out). The enzyme catalyses Na(+)(in) = Na(+)(out). Functionally, after binding acetylcholine, the AChR responds by an extensive change in conformation that affects all subunits and leads to opening of an ion-conducting channel across the plasma membrane. The protein is Acetylcholine receptor subunit delta (chrnd) of Tetronarce californica (Pacific electric ray).